Consider the following 450-residue polypeptide: Tol-Pal system protein TolB (450 aa).

The N-terminal stretch at 1-37 (MIERNGLQRMPFRLNRRHMISGMASAAVLLGSRQALG) is a signal peptide.

It belongs to the TolB family. In terms of assembly, the Tol-Pal system is composed of five core proteins: the inner membrane proteins TolA, TolQ and TolR, the periplasmic protein TolB and the outer membrane protein Pal. They form a network linking the inner and outer membranes and the peptidoglycan layer.

The protein localises to the periplasm. Functionally, part of the Tol-Pal system, which plays a role in outer membrane invagination during cell division and is important for maintaining outer membrane integrity. The polypeptide is Tol-Pal system protein TolB (Nitrobacter winogradskyi (strain ATCC 25391 / DSM 10237 / CIP 104748 / NCIMB 11846 / Nb-255)).